We begin with the raw amino-acid sequence, 233 residues long: Adapter protein MecA (233 aa).

It belongs to the MecA family. As to quaternary structure, homodimer.

In terms of biological role, enables the recognition and targeting of unfolded and aggregated proteins to the ClpC protease or to other proteins involved in proteolysis. The polypeptide is Adapter protein MecA (Lactococcus lactis subsp. lactis (strain IL1403) (Streptococcus lactis)).